A 534-amino-acid polypeptide reads, in one-letter code: MEKSLADQISDIAIKPVNKDFDIEDEENASLFQHNEKNGESDLSDYGNSNTEETKKAHYLEVEKSKLRAEKGLELNDPKYTGVKGSRQALYEEVSENEDEEEEEEEEEEKEEDALSFRTDSEDEEVEIDEEESDADGGETEEAQQKRHALSKLIQQETKQAINKLSQSVQRDASKGYSILQQTKLFDNIIDLRIKLQKAVIAANKLPLTTESWEEAKMDDSEETKRLLKENEKLFNNLFNRLINFRIKFQLGDHITQNEEVAKHKLSKKRSLKELYQETNSLDSELKEYRTAVLNKWSTKVSSASGNAALSSNKFKAINLPADVQVENQLSDMSRLMKRTKLNRRNITPLYFQKDCANGRLPELISPVVKDSVDDNENSDDGLDIPKNYDPRRKDNNAIDITENPYVFDDEDFYRVLLNDLIDKKISNAHNSESAAITITSTNARSNNKLKKNIDTKASKGRKLNYSVQDPIANYEAPITSGYKWSDDQIDEFFAGLLGQRVNFNENEDEEQHARIENDEELEAVKNDDIQIFG.

A disordered region spans residues 27–148 (ENASLFQHNE…ETEEAQQKRH (122 aa)). 2 positions are modified to phosphoserine: Ser41 and Ser44. A compositionally biased stretch (basic and acidic residues) spans 52 to 77 (EETKKAHYLEVEKSKLRAEKGLELND). Residues 86 to 161 (SRQALYEEVS…KLIQQETKQA (76 aa)) are a coiled coil. Acidic residues-rich tracts occupy residues 93–114 (EVSENEDEEEEEEEEEEKEEDA) and 121–142 (SEDEEVEIDEEESDADGGETEE). A phosphoserine mark is found at Ser366, Ser372, and Ser379.

The protein belongs to the AATF family.

It localises to the nucleus. The protein localises to the nucleolus. Involved in endoplasmic reticulum to Golgi transport. Involved in a protein-transport step blocked by brefeldin A, which disrupts the Golgi apparatus and its incoming protein flux. May also be involved for mass growth or cell proliferation. The polypeptide is Protein BFR2 (BFR2) (Saccharomyces cerevisiae (strain ATCC 204508 / S288c) (Baker's yeast)).